A 1263-amino-acid chain; its full sequence is DNA polymerase II large subunit (1263 aa).

Residues Leu-1224 to Lys-1250 form a disordered region. A compositionally biased stretch (basic and acidic residues) spans Lys-1235–Ala-1244.

Belongs to the archaeal DNA polymerase II family. As to quaternary structure, heterodimer of a large subunit and a small subunit.

It catalyses the reaction DNA(n) + a 2'-deoxyribonucleoside 5'-triphosphate = DNA(n+1) + diphosphate. The catalysed reaction is Exonucleolytic cleavage in the 3'- to 5'-direction to yield nucleoside 5'-phosphates.. Functionally, possesses two activities: a DNA synthesis (polymerase) and an exonucleolytic activity that degrades single-stranded DNA in the 3'- to 5'-direction. Has a template-primer preference which is characteristic of a replicative DNA polymerase. The sequence is that of DNA polymerase II large subunit (polC) from Pyrococcus furiosus (strain ATCC 43587 / DSM 3638 / JCM 8422 / Vc1).